Here is a 631-residue protein sequence, read N- to C-terminus: DDB1- and CUL4-associated factor 8-like protein 2 (631 aa).

Disordered regions lie at residues 1–91 (MSHQ…EDFE) and 108–163 (EEET…HEQY). Residues 44–54 (SELSVTVTGDG) are compositionally biased toward polar residues. 2 stretches are compositionally biased toward acidic residues: residues 77-88 (SASEDIELESLE) and 108-147 (EEETEREEEDEEIQEEGGEEEEEEEEEEEEEEEEEEEEEE). 7 WD repeats span residues 226–265 (DHVGCVNTVHFNQRGTRLASSGDDLKVIVWDWVRQRPVLN), 269–310 (GHTN…YFNN), 316–356 (QHRG…PASK), 364–404 (DKKV…KKEN), 420–459 (DFPTNITCVVYSHDGTELLASYNDDDIYLFNSSHSDGAQY), 467–507 (RNNT…IIQF), and 511–550 (SREGTINCLEPHPYLPVLACSGLDHDVKIWTPTAKAATEL). A disordered region spans residues 594–631 (QDWRSGEAEFPDEESDESSSTSETSEEEVQDRVQCMPS).

Belongs to the WD repeat DCAF8 family.

This Homo sapiens (Human) protein is DDB1- and CUL4-associated factor 8-like protein 2 (DCAF8L2).